A 303-amino-acid chain; its full sequence is Signal recognition particle receptor FtsY (303 aa).

GTP is bound by residues G108–T115, D190–R194, and T254–D257.

This sequence belongs to the GTP-binding SRP family. FtsY subfamily. In terms of assembly, part of the signal recognition particle protein translocation system, which is composed of SRP and FtsY. SRP is a ribonucleoprotein composed of Ffh and a 4.5S RNA molecule.

The protein localises to the cell inner membrane. The protein resides in the cytoplasm. It catalyses the reaction GTP + H2O = GDP + phosphate + H(+). In terms of biological role, involved in targeting and insertion of nascent membrane proteins into the cytoplasmic membrane. Acts as a receptor for the complex formed by the signal recognition particle (SRP) and the ribosome-nascent chain (RNC). Interaction with SRP-RNC leads to the transfer of the RNC complex to the Sec translocase for insertion into the membrane, the hydrolysis of GTP by both Ffh and FtsY, and the dissociation of the SRP-FtsY complex into the individual components. The polypeptide is Signal recognition particle receptor FtsY (Rickettsia bellii (strain RML369-C)).